A 48-amino-acid chain; its full sequence is uncharacterized protein (48 aa).

This is an uncharacterized protein from Schizosaccharomyces pombe (strain 972 / ATCC 24843) (Fission yeast).